Here is a 670-residue protein sequence, read N- to C-terminus: Protein ACCELERATED CELL DEATH 6 (670 aa).

The Cytoplasmic segment spans residues 1 to 456 (MDSSGADLDR…PNYIFHERWT (456 aa)). Residues 18–47 (LVSHDQRKDFSHSGGVGTTSPTGDTEPVPK) are disordered. 10 ANK repeats span residues 66–95 (EMTPEIFGGMSNGEKECLEKLRSNGTPMER), 100–129 (TGDSILHIAAKWGHLELVKEIIFECPCLLF), 134–163 (SRQTPLHVATHGGHTKVVEALVASVTSALA), 182–211 (DGNTALYYAIEGRYLEMATCLVNADKDAPF), 216–248 (KGISSLYEAVDAGNKFEDLVKAILKTTDDNVDR), 260–290 (QGNKHLAHVALKAKSIGVLDVILDEYPSLMD), 295–325 (DGRTCLSYGASIGYYKGLCNILNRSTKGVYV), 329–358 (DGSFPIHSAAKNEHYEIIKEFIKRCPASKY), 363–391 (LGQNILHVAAKNEASLTAYMLMHDKDTKH), and 399–428 (DGNTPLHLAVMNWDFDSITCLASRNHEILK). A helical transmembrane segment spans residues 457–477 (LALLLYAIHSSGFESVKSLTI). Residues 478 to 492 (QSVPLDPKKNRHYVN) are Extracellular-facing. Residues 493–513 (ALLVVAALVATVTFAAGFTIP) form a helical membrane-spanning segment. Over 514-537 (GGYISDSKKPNLGRATLATNPTLF) the chain is Cytoplasmic. The helical transmembrane segment at 538 to 558 (IFLLFDILAMQSSVATICTLI) threads the bilayer. Residues 559 to 577 (WAQLGDLALILKSLHVALP) lie on the Extracellular side of the membrane. The helical transmembrane segment at 578-598 (LLLFSLLCMPVAFLFGVITAI) threads the bilayer. The Cytoplasmic portion of the chain corresponds to 599 to 602 (AHVK). The helical transmembrane segment at 603 to 623 (WLLVTISIISGGFFLFAIFIL) threads the bilayer. The Extracellular segment spans residues 624-638 (GPHVMLQRSHLPPSS). A helical membrane pass occupies residues 639-659 (GIFLKTFMLTIDISELFVILI). Over 660 to 670 (KACFGCVACSE) the chain is Cytoplasmic.

Component of large complexes containing, at least, FLS2, HSP70 and ACD6 in endoplasmic reticulum, plasma membrane and soluble fraction. Associated with HSP70 proteins during endoplasmic reticulum-associated degradation (ERAD). Reduced complex levels upon benzothiazole (BTH) treatment. Ubiquitinated. Basal expression requires light and salicylic acid (SA).

It is found in the cell membrane. Its subcellular location is the endoplasmic reticulum membrane. Functionally, dose-dependent activator of the defense response against virulent pathogens, including bacteria, fungi and oomycetes, that acts in a positive feedback loop with the defense signal salicylic acid (SA). Regulates the salicylic acid (SA) signaling pathway leading to cell death and modulating cell fate (e.g. cell enlargement and/or cell division). In response to SA signaling, triggers the accumulation of FLS2 at the plasma membrane, thus priming defenses. Involved in SA-dependent freezing signaling and tolerance. In Arabidopsis thaliana (Mouse-ear cress), this protein is Protein ACCELERATED CELL DEATH 6.